The following is a 485-amino-acid chain: Glycogen synthase (485 aa).

An ADP-alpha-D-glucose-binding site is contributed by lysine 15.

The protein belongs to the glycosyltransferase 1 family. Bacterial/plant glycogen synthase subfamily.

It carries out the reaction [(1-&gt;4)-alpha-D-glucosyl](n) + ADP-alpha-D-glucose = [(1-&gt;4)-alpha-D-glucosyl](n+1) + ADP + H(+). Its pathway is glycan biosynthesis; glycogen biosynthesis. In terms of biological role, synthesizes alpha-1,4-glucan chains using ADP-glucose. The polypeptide is Glycogen synthase (Geobacillus thermodenitrificans (strain NG80-2)).